A 185-amino-acid polypeptide reads, in one-letter code: Avirulence protein ATR39-1 (185 aa).

Positions 1-20 (MVKCTPLLALTVIVSAGSDA) are cleaved as a signal peptide. The RxLR-dEER motif lies at 49-66 (RVLRASDVPDEVAAGESR).

The protein belongs to the RxLR effector family.

Its subcellular location is the secreted. The protein localises to the host cell. In terms of biological role, secreted effector that acts as an elicitor of hypersensitive response (HR) specifically on plants carrying defense protein RPP39. The allele ATR39-1 is recognized by RPP39, whereas the ATR39-2 allele is not recognized. The chain is Avirulence protein ATR39-1 from Hyaloperonospora arabidopsidis (strain Emoy2) (Downy mildew agent).